Here is a 473-residue protein sequence, read N- to C-terminus: Siroheme synthase (473 aa).

The interval 1 to 203 is precorrin-2 dehydrogenase /sirohydrochlorin ferrochelatase; sequence MNYLPIFIDL…GNKEQAINVL (203 aa). NAD(+) contacts are provided by residues 22 to 23 and 43 to 44; these read EV and KE. Residue Ser-128 is modified to Phosphoserine. The interval 215 to 473 is uroporphyrinogen-III C-methyltransferase; the sequence is GEIILVGAGP…KNKFSTLTFI (259 aa). Pro-224 contributes to the S-adenosyl-L-methionine binding site. Asp-247 functions as the Proton acceptor in the catalytic mechanism. Lys-269 serves as the catalytic Proton donor. Residues 300–302, Ile-305, Met-382, and Gly-411 contribute to the S-adenosyl-L-methionine site; that span reads GGD.

It in the N-terminal section; belongs to the precorrin-2 dehydrogenase / sirohydrochlorin ferrochelatase family. This sequence in the C-terminal section; belongs to the precorrin methyltransferase family.

It carries out the reaction uroporphyrinogen III + 2 S-adenosyl-L-methionine = precorrin-2 + 2 S-adenosyl-L-homocysteine + H(+). It catalyses the reaction precorrin-2 + NAD(+) = sirohydrochlorin + NADH + 2 H(+). The enzyme catalyses siroheme + 2 H(+) = sirohydrochlorin + Fe(2+). Its pathway is cofactor biosynthesis; adenosylcobalamin biosynthesis; precorrin-2 from uroporphyrinogen III: step 1/1. It functions in the pathway cofactor biosynthesis; adenosylcobalamin biosynthesis; sirohydrochlorin from precorrin-2: step 1/1. The protein operates within porphyrin-containing compound metabolism; siroheme biosynthesis; precorrin-2 from uroporphyrinogen III: step 1/1. It participates in porphyrin-containing compound metabolism; siroheme biosynthesis; siroheme from sirohydrochlorin: step 1/1. Its pathway is porphyrin-containing compound metabolism; siroheme biosynthesis; sirohydrochlorin from precorrin-2: step 1/1. Functionally, multifunctional enzyme that catalyzes the SAM-dependent methylations of uroporphyrinogen III at position C-2 and C-7 to form precorrin-2 via precorrin-1. Then it catalyzes the NAD-dependent ring dehydrogenation of precorrin-2 to yield sirohydrochlorin. Finally, it catalyzes the ferrochelation of sirohydrochlorin to yield siroheme. The chain is Siroheme synthase from Buchnera aphidicola subsp. Acyrthosiphon pisum (strain APS) (Acyrthosiphon pisum symbiotic bacterium).